Consider the following 510-residue polypeptide: NAD(P)H-quinone oxidoreductase subunit 2 B, chloroplastic (510 aa).

14 consecutive transmembrane segments (helical) span residues 24-44 (LLLFHGSFIFPECILIFGLIL), 59-79 (WFYFISSTSLVISITALLFRW), 99-119 (IFQFLILLCSTLCIPLSVEYI), 124-144 (MAITEFLLFVLTATLGGMFLC), 149-169 (LITIFVALECFSLCSYLLSGY), 184-204 (LLMGGASSSILVYGFSWLYGL), 229-249 (ISIALIFITVGLGFKLSLAPF), 261-281 (PTPVVAFLSVTSKVAALALAT), 295-315 (WHLLLEILAILSMILGNLLAI), 323-343 (MLAYSSIGQIGYVIIGIIVGD), 354-374 (YMLFYISMNLGTFACIVLFGL), 395-415 (ALSLALCLLSLGGLPPLAGFF), 418-438 (LYLFWCGWQAGLYFLVSIGLL), and 484-504 (MTVCVIASTILGISMNPILAI).

It belongs to the complex I subunit 2 family. In terms of assembly, NDH is composed of at least 16 different subunits, 5 of which are encoded in the nucleus.

The protein localises to the plastid. The protein resides in the chloroplast thylakoid membrane. It catalyses the reaction a plastoquinone + NADH + (n+1) H(+)(in) = a plastoquinol + NAD(+) + n H(+)(out). The enzyme catalyses a plastoquinone + NADPH + (n+1) H(+)(in) = a plastoquinol + NADP(+) + n H(+)(out). In terms of biological role, NDH shuttles electrons from NAD(P)H:plastoquinone, via FMN and iron-sulfur (Fe-S) centers, to quinones in the photosynthetic chain and possibly in a chloroplast respiratory chain. The immediate electron acceptor for the enzyme in this species is believed to be plastoquinone. Couples the redox reaction to proton translocation, and thus conserves the redox energy in a proton gradient. In Zea mays (Maize), this protein is NAD(P)H-quinone oxidoreductase subunit 2 B, chloroplastic.